Reading from the N-terminus, the 223-residue chain is Ribonuclease HII (223 aa).

Residues 32-223 (FHIAGVDEVG…LKGRFRDNMS (192 aa)) enclose the RNase H type-2 domain. Residues D38, E39, and D130 each contribute to the a divalent metal cation site.

Belongs to the RNase HII family. The cofactor is Mn(2+). Mg(2+) is required as a cofactor.

The protein localises to the cytoplasm. It carries out the reaction Endonucleolytic cleavage to 5'-phosphomonoester.. Its function is as follows. Endonuclease that specifically degrades the RNA of RNA-DNA hybrids. The chain is Ribonuclease HII from Bartonella quintana (strain Toulouse) (Rochalimaea quintana).